A 178-amino-acid chain; its full sequence is Cytochrome b6-f complex iron-sulfur subunit (178 aa).

Residues 20–42 form a helical membrane-spanning segment; the sequence is LLTFGTATGVALGALYPVANFFM. Residues 71–161 form the Rieske domain; that stretch reads NHPAGDRSLV…IDIDDDNVLV (91 aa). [2Fe-2S] cluster contacts are provided by Cys-107, His-109, Cys-125, and His-128. Cys-112 and Cys-127 are disulfide-bonded.

The protein belongs to the Rieske iron-sulfur protein family. The 4 large subunits of the cytochrome b6-f complex are cytochrome b6, subunit IV (17 kDa polypeptide, PetD), cytochrome f and the Rieske protein, while the 4 small subunits are PetG, PetL, PetM and PetN. The complex functions as a dimer. [2Fe-2S] cluster serves as cofactor.

The protein localises to the cellular thylakoid membrane. The catalysed reaction is 2 oxidized [plastocyanin] + a plastoquinol + 2 H(+)(in) = 2 reduced [plastocyanin] + a plastoquinone + 4 H(+)(out). Component of the cytochrome b6-f complex, which mediates electron transfer between photosystem II (PSII) and photosystem I (PSI), cyclic electron flow around PSI, and state transitions. The polypeptide is Cytochrome b6-f complex iron-sulfur subunit (Prochlorococcus marinus (strain SARG / CCMP1375 / SS120)).